Consider the following 71-residue polypeptide: Phosphatidylinositol N-acetylglucosaminyltransferase subunit Y (71 aa).

Over 1-3 the chain is Cytoplasmic; that stretch reads MFL. A helical membrane pass occupies residues 4 to 26; sequence SLPTLTVLIPLVSLAGLFYSASV. Topologically, residues 27 to 44 are lumenal; sequence EENFPQGCTSTASLCFYS. Residues 45 to 65 form a helical membrane-spanning segment; it reads LLLPITIPVYVFFHLWTWMGI. Residues 66-71 lie on the Cytoplasmic side of the membrane; the sequence is KLFRHN.

In terms of assembly, component of the glycosylphosphatidylinositol-N-acetylglucosaminyltransferase (GPI-GnT) complex composed at least by PIGA, PIGC, PIGH, PIGP, PIGQ, PIGY and DPM2. Interacts directly with PIGA; this interaction regulates glycosylphosphatidylinositol-N-acetylglucosaminyltransferase activity. Does not interact with Ras proteins.

It is found in the endoplasmic reticulum membrane. It functions in the pathway glycolipid biosynthesis; glycosylphosphatidylinositol-anchor biosynthesis. Its function is as follows. Part of the glycosylphosphatidylinositol-N-acetylglucosaminyltransferase (GPI-GnT) complex that catalyzes the transfer of N-acetylglucosamine from UDP-N-acetylglucosamine to phosphatidylinositol and participates in the first step of GPI biosynthesis. May act by regulating the catalytic subunit PIGA. This is Phosphatidylinositol N-acetylglucosaminyltransferase subunit Y from Homo sapiens (Human).